The chain runs to 232 residues: Ribonuclease 3 (232 aa).

The region spanning 6–133 is the RNase III domain; the sequence is FNDIENRLGV…VIAAVYLDKG (128 aa). Mg(2+) is bound at residue glutamate 46. The active site involves aspartate 50. The Mg(2+) site is built by aspartate 119 and glutamate 122. Residue glutamate 122 is part of the active site. Residues 160–229 enclose the DRBM domain; the sequence is DFKTKLQELL…AKEALKRLEK (70 aa).

Belongs to the ribonuclease III family. As to quaternary structure, homodimer. Mg(2+) is required as a cofactor.

The protein localises to the cytoplasm. It catalyses the reaction Endonucleolytic cleavage to 5'-phosphomonoester.. Digests double-stranded RNA. Involved in the processing of primary rRNA transcript to yield the immediate precursors to the large and small rRNAs (23S and 16S). Processes some mRNAs, and tRNAs when they are encoded in the rRNA operon. Processes pre-crRNA and tracrRNA of type II CRISPR loci if present in the organism. The chain is Ribonuclease 3 from Clostridium botulinum (strain Alaska E43 / Type E3).